A 963-amino-acid chain; its full sequence is Longitudinals lacking protein, isoforms J/P/Q/S/Z (963 aa).

Positions 32-97 (VDCTLAAEGK…MYRGEVNISQ (66 aa)) constitute a BTB domain. 4 disordered regions span residues 115-200 (LSDN…SSVL), 228-340 (SSGP…ASAS), 447-469 (DAQQRDPQDEAGQNEGGESRIRV), and 482-520 (GKSSDEPSDKLTQSKKSLISDAKTTNKTSTPIRPKVSTT). 4 stretches are compositionally biased toward low complexity: residues 162–175 (SGDVSGSREGSSSP), 228–251 (SSGPAAGTSSQASSTQQQQPLTST), 263–293 (TSSTAAPASGASASAAVQQAHLHQQQAQTTS), and 329–340 (NSATGPNPASAS). Polar residues predominate over residues 491–512 (KLTQSKKSLISDAKTTNKTSTP). The segment at 849 to 871 (WVCRNCNRTYKWKNSLKCHLKNE) adopts a C2H2-type 1; degenerate zinc-finger fold. The C2H2-type 2; degenerate zinc finger occupies 878-901 (YFCSKMCGYATNVHSNLKRHLNTK). Residues 900-963 (TKCRDREKDA…YTLVFQNDSA (64 aa)) are disordered. A compositionally biased stretch (basic and acidic residues) spans 901-915 (KCRDREKDADDEKKP). Residues 937 to 953 (SSSNNNNNGGGSSTSST) are compositionally biased toward low complexity. Residues 954–963 (YTLVFQNDSA) are compositionally biased toward polar residues.

By stage 11, isoform Q, isoform P and isoform Z are expressed throughout the mesoderm. From stage 15, expression of isoform P expands to all tissues, whereas expression of isoform Z and isoform Q becomes restricted during later stages; starting from stage 14 to 16, isoform Z is expressed in muscle, and isoform Q and isoform Z are expressed in the CNS. For some isoforms, expression is also seen in specific types of cells in the embryo; isoform Z is expressed in the ventral furrow at stage 5, and isoform Q is expressed around the tracheal pits at stage 11. Isoform Z also shows transient enrichment in a dorsal cell layer in the CNS at stages 13 and 14.

The protein localises to the nucleus. Its function is as follows. Putative transcription factor required for axon growth and guidance in the central and peripheral nervous systems. Repels CNS axons away from the midline by promoting the expression of the midline repellent sli and its receptor robo. The chain is Longitudinals lacking protein, isoforms J/P/Q/S/Z from Drosophila melanogaster (Fruit fly).